The sequence spans 732 residues: Aldehyde oxidoreductase molybdenum-binding subunit PaoC (732 aa).

Mo-molybdopterin cytosine dinucleotide contacts are provided by residues 241 to 242 (GF), 468 to 470 (IGT), 511 to 512 (GA), 615 to 621 (RILNPKT), Gln625, and 688 to 691 (KGVG). The Proton acceptor role is filled by Glu692.

The protein belongs to the xanthine dehydrogenase family. Heterotrimer composed of PaoA, PaoB and PaoC. Mo-molybdopterin cytosine dinucleotide serves as cofactor.

Its subcellular location is the periplasm. It carries out the reaction an aldehyde + A + H2O = a carboxylate + AH2 + H(+). The complex requires PaoD for activity. Functionally, oxidizes aldehydes to the corresponding carboxylic acids with a preference for aromatic aldehydes. It might play a role in the detoxification of aldehydes to avoid cell damage. The polypeptide is Aldehyde oxidoreductase molybdenum-binding subunit PaoC (Escherichia coli (strain K12)).